The following is a 304-amino-acid chain: MAVQAHHMNIFSQFISPNRDCVKFQENMNHGEFEFTGGEVPLITGESFAVEPLAAKANFNKAESGLSYNFTVPPLSTKRQRDFQFSDSNAPVKRRSVAFDSSSPSLINVELVSQIQNQQQSEIDRFVAQQTEKLRIEIEARQQTQTRMLASAVQNVIAKKLKEKDDEIVRIRNLNWVLQERVKSLYVENQIWRDIAQTNEANANTLRTNLDQVLAQLETFPTASAVVEDDAESSCGSCCGDGGGEAVTAVGGGCKRCGEREASVLVLPCRHLCLCTVCGGSALLRTCPVCDMVMNASVHVNMSS.

The tract at residues 178 to 214 (LQERVKSLYVENQIWRDIAQTNEANANTLRTNLDQVL) is WRD domain. Residues 197–220 (QTNEANANTLRTNLDQVLAQLETF) are a coiled coil. The segment at 254-291 (CKRCGEREASVLVLPCRHLCLCTVCGGSALLRTCPVCD) adopts an RING-type zinc-finger fold.

As to quaternary structure, interacts with MYB108/BOS1 and the DELLA proteins GAI, RGA, RGL1, RGL2 and RGL3. As to expression, expressed in leaves, siliques, roots, flowering tissues and stigma tips.

Its subcellular location is the nucleus. It catalyses the reaction S-ubiquitinyl-[E2 ubiquitin-conjugating enzyme]-L-cysteine + [acceptor protein]-L-lysine = [E2 ubiquitin-conjugating enzyme]-L-cysteine + N(6)-ubiquitinyl-[acceptor protein]-L-lysine.. It participates in protein degradation; proteasomal ubiquitin-dependent pathway. Functionally, E3 ubiquitin-protein ligase involved in the regulation of pathogen and abiotic stress responses by facilitating degradation of MYB108/BOI. Attenuates cell death by preventing caspase activation. Has no effect on the stability of the DELLA proteins. Not regulated by MYB108/BOI. This is E3 ubiquitin-protein ligase BOI (BOI) from Arabidopsis thaliana (Mouse-ear cress).